The chain runs to 235 residues: Orotidine 5'-phosphate decarboxylase (235 aa).

Residues D12, K34, 61 to 70 (DLKFHDIPNT), T121, R182, Q191, G211, and R212 each bind substrate. The active-site Proton donor is the K63.

The protein belongs to the OMP decarboxylase family. Type 1 subfamily. In terms of assembly, homodimer.

The enzyme catalyses orotidine 5'-phosphate + H(+) = UMP + CO2. The protein operates within pyrimidine metabolism; UMP biosynthesis via de novo pathway; UMP from orotate: step 2/2. Its function is as follows. Catalyzes the decarboxylation of orotidine 5'-monophosphate (OMP) to uridine 5'-monophosphate (UMP). This is Orotidine 5'-phosphate decarboxylase from Marinomonas sp. (strain MWYL1).